The following is a 78-amino-acid chain: UPF0270 protein YE3952 (78 aa).

Belongs to the UPF0270 family.

The polypeptide is UPF0270 protein YE3952 (Yersinia enterocolitica serotype O:8 / biotype 1B (strain NCTC 13174 / 8081)).